A 676-amino-acid chain; its full sequence is UvrABC system protein B (676 aa).

Positions 39–424 constitute a Helicase ATP-binding domain; the sequence is RGILDGIPSQ…RGHIIEQIIR (386 aa). 52–59 serves as a coordination point for ATP; it reads GTTGSGKT. Residues 105-128 carry the Beta-hairpin motif; it reads YYDYYQPEAYIARSDTYIEKSLLI. The Helicase C-terminal domain maps to 441–604; the sequence is QIDDLLEEIR…ITPKPIIKPI (164 aa). The disordered stretch occupies residues 611–631; it reads KEGAQEDSRPETQSTEDLESS. Residues 629-664 form the UVR domain; the sequence is ESSIKQYEEAMYKAAQDFQFDEAAKYRDLMNAAKRQ.

Belongs to the UvrB family. Forms a heterotetramer with UvrA during the search for lesions. Interacts with UvrC in an incision complex.

It localises to the cytoplasm. Its function is as follows. The UvrABC repair system catalyzes the recognition and processing of DNA lesions. A damage recognition complex composed of 2 UvrA and 2 UvrB subunits scans DNA for abnormalities. Upon binding of the UvrA(2)B(2) complex to a putative damaged site, the DNA wraps around one UvrB monomer. DNA wrap is dependent on ATP binding by UvrB and probably causes local melting of the DNA helix, facilitating insertion of UvrB beta-hairpin between the DNA strands. Then UvrB probes one DNA strand for the presence of a lesion. If a lesion is found the UvrA subunits dissociate and the UvrB-DNA preincision complex is formed. This complex is subsequently bound by UvrC and the second UvrB is released. If no lesion is found, the DNA wraps around the other UvrB subunit that will check the other stand for damage. This is UvrABC system protein B from Chlamydia muridarum (strain MoPn / Nigg).